The primary structure comprises 394 residues: Na(+)/H(+) antiporter NhaA (394 aa).

A run of 11 helical transmembrane segments spans residues 14–34 (AGGILLLIAALLAMLCANSVF), 59–79 (LLMWINDGFMAVFFILVGMEV), 95–115 (IFPAFAAIGGMVVPALIYWFI), 125–145 (GWAIPMATDIAFALGIVALLS), 155–175 (FLLALAIIDDIGAIIVIALFF), 177–197 (NELSMLALIIASIAIMILITM), 204–224 (GIIHYVIVGTILWASVLKSGV), 258–278 (WCAFAILPLFAFSNAGVSLAG), 292–312 (ITLGLLIGKPVGVFSFCYLAV), 328–348 (VFAIAVLCGIGFTMSVFIAGL), and 362–382 (LSRLGILIGTSIAAIVGYILL).

This sequence belongs to the NhaA Na(+)/H(+) (TC 2.A.33) antiporter family.

The protein resides in the cell inner membrane. It carries out the reaction Na(+)(in) + 2 H(+)(out) = Na(+)(out) + 2 H(+)(in). In terms of biological role, na(+)/H(+) antiporter that extrudes sodium in exchange for external protons. This Haemophilus ducreyi (strain 35000HP / ATCC 700724) protein is Na(+)/H(+) antiporter NhaA.